Consider the following 474-residue polypeptide: PTS system MurNAc-GlcNAc-specific EIIBC component (474 aa).

One can recognise a PTS EIIB type-1 domain in the interval 5-87; it reads ERLAKDITHA…ADQSGATLAE (83 aa). C27 acts as the Phosphocysteine intermediate; for EIIB activity in catalysis. The 351-residue stretch at 124 to 474 folds into the PTS EIIC type-1 domain; it reads KSIANIFIPL…GTTKEMRNPE (351 aa). Helical transmembrane passes span 129-149, 167-187, 193-213, 228-248, 268-288, 299-319, 343-363, 378-398, 402-422, and 444-464; these read IFIP…IAAI, IVTV…IFTG, VFGA…LTGI, LAAG…LSMV, ITLL…AGFV, IIGV…LPLV, LLPI…ALWV, ALPV…TLPL, FFTA…IGHI, and LGYI…TYFF.

It is found in the cell membrane. It catalyses the reaction N-acetyl-beta-D-muramate-(1-&gt;4)-N-acetyl-D-glucosamine(out) + N(pros)-phospho-L-histidyl-[protein] = 6-phospho-N-acetyl-beta-D-muramate-(1-&gt;4)-N-acetyl-D-glucosamine(in) + L-histidyl-[protein]. It participates in cell wall biogenesis; peptidoglycan recycling. In terms of biological role, the phosphoenolpyruvate-dependent sugar phosphotransferase system (sugar PTS), a major carbohydrate active transport system, catalyzes the phosphorylation of incoming sugar substrates concomitantly with their translocation across the cell membrane. This system is involved in the uptake and phosphorylation of MurNAc-GlcNAc, the principle peptidoglycan turnover product of S.aureus, yielding cytoplasmic MurNAc 6P-GlcNAc. The sequence is that of PTS system MurNAc-GlcNAc-specific EIIBC component from Staphylococcus epidermidis (strain ATCC 35984 / DSM 28319 / BCRC 17069 / CCUG 31568 / BM 3577 / RP62A).